The sequence spans 327 residues: 4-hydroxythreonine-4-phosphate dehydrogenase (327 aa).

2 residues coordinate substrate: His134 and Thr135. Residues His164, His209, and His264 each coordinate a divalent metal cation. Substrate-binding residues include Lys272, Asn281, and Arg290.

The protein belongs to the PdxA family. Homodimer. It depends on Zn(2+) as a cofactor. The cofactor is Mg(2+). Requires Co(2+) as cofactor.

Its subcellular location is the cytoplasm. The enzyme catalyses 4-(phosphooxy)-L-threonine + NAD(+) = 3-amino-2-oxopropyl phosphate + CO2 + NADH. The protein operates within cofactor biosynthesis; pyridoxine 5'-phosphate biosynthesis; pyridoxine 5'-phosphate from D-erythrose 4-phosphate: step 4/5. In terms of biological role, catalyzes the NAD(P)-dependent oxidation of 4-(phosphooxy)-L-threonine (HTP) into 2-amino-3-oxo-4-(phosphooxy)butyric acid which spontaneously decarboxylates to form 3-amino-2-oxopropyl phosphate (AHAP). The sequence is that of 4-hydroxythreonine-4-phosphate dehydrogenase from Shewanella frigidimarina (strain NCIMB 400).